Here is a 495-residue protein sequence, read N- to C-terminus: UDP-glycosyltransferase 73C13 (495 aa).

Catalysis depends on histidine 24, which acts as the Proton acceptor. Histidine 24 provides a ligand contact to an anthocyanidin. Residue aspartate 129 is the Charge relay of the active site. UDP-alpha-D-glucose is bound by residues alanine 356, glutamine 358, histidine 373, tryptophan 376, asparagine 377, serine 378, and glutamate 381. Alanine 396 serves as a coordination point for an anthocyanidin. Residues aspartate 397 and glutamine 398 each coordinate UDP-alpha-D-glucose.

The protein belongs to the UDP-glycosyltransferase family.

The enzyme catalyses oleanolate + UDP-alpha-D-glucose = oleanolate 3-O-beta-D-glucoside + UDP + H(+). Functionally, catalyzes the transfer of a glucose (Glc) moiety from UDP-Glc to the C-3 position of the oleanane sapogenins oleanolate and hederagenin, and to the C-28 carboxylic group of the lupane sapogenin betulinate. The monoglucosylated hederagenin 3-O-beta-D-glucoside is a feeding deterrent of the yellow-striped flea beetle (Phyllotreta nemorum). The sequence is that of UDP-glycosyltransferase 73C13 from Barbarea vulgaris (Yellow rocket).